Consider the following 257-residue polypeptide: DNA repair protein RecO (257 aa).

Belongs to the RecO family.

Functionally, involved in DNA repair and RecF pathway recombination. This chain is DNA repair protein RecO, found in Synechococcus sp. (strain CC9605).